Consider the following 463-residue polypeptide: Elongation factor 1-alpha (463 aa).

In terms of domain architecture, tr-type G spans 8-245 (KTHLNIVIIG…DALVPPVRPA (238 aa)). Residues 17 to 24 (GHVDSGKS) are G1. A GTP-binding site is contributed by 17–24 (GHVDSGKS). A G2 region spans residues 73–77 (GITID). Residues 94 to 97 (DAPG) form a G3 region. GTP contacts are provided by residues 94 to 98 (DAPGH) and 156 to 159 (NKMD). Residues 156–159 (NKMD) are G4. Residues 197 to 199 (SGW) form a G5 region.

It belongs to the TRAFAC class translation factor GTPase superfamily. Classic translation factor GTPase family. EF-Tu/EF-1A subfamily. As to quaternary structure, the 42S RNP particle comprises four subunits each of which contains one molecule of 5S RNA, three molecules of tRNA, two molecules of EF1-alpha and one molecule of the 5S RNA binding protein 43.

It localises to the cytoplasm. Its function is as follows. This protein is one of two protein components of a 42S RNP particle that is very abundant in previtellogenic oocytes. A major function served by 42sp50 appears to be the storage of tRNAs for later use in oogenesis and early embryogenesis. Purified 42S particles can directly transfer aminoacyl tRNA to ribosomes. This is Elongation factor 1-alpha from Xenopus laevis (African clawed frog).